The chain runs to 162 residues: Endoribonuclease YbeY (162 aa).

Residues H117, H121, and H127 each coordinate Zn(2+).

The protein belongs to the endoribonuclease YbeY family. The cofactor is Zn(2+).

It is found in the cytoplasm. Its function is as follows. Single strand-specific metallo-endoribonuclease involved in late-stage 70S ribosome quality control and in maturation of the 3' terminus of the 16S rRNA. This chain is Endoribonuclease YbeY, found in Francisella tularensis subsp. mediasiatica (strain FSC147).